The following is a 305-amino-acid chain: Translation initiation factor eIF2B subunit alpha (305 aa).

Lysine 35 is subject to N6-acetyllysine.

Belongs to the eIF-2B alpha/beta/delta subunits family. As to quaternary structure, component of the translation initiation factor 2B (eIF2B) complex which is a heterodecamer of two sets of five different subunits: alpha, beta, gamma, delta and epsilon. Subunits alpha, beta and delta comprise a regulatory subcomplex and subunits epsilon and gamma comprise a catalytic subcomplex. Within the complex, the hexameric regulatory complex resides at the center, with the two heterodimeric catalytic subcomplexes bound on opposite sides.

It is found in the cytoplasm. Its subcellular location is the cytosol. Its activity is regulated as follows. Activated by the chemical integrated stress response (ISR) inhibitor ISRIB which stimulates guanine nucleotide exchange factor activity for both phosphorylated and unphosphorylated eIF2. Acts as a component of the translation initiation factor 2B (eIF2B) complex, which catalyzes the exchange of GDP for GTP on eukaryotic initiation factor 2 (eIF2) gamma subunit. Its guanine nucleotide exchange factor activity is repressed when bound to eIF2 complex phosphorylated on the alpha subunit, thereby limiting the amount of methionyl-initiator methionine tRNA available to the ribosome and consequently global translation is repressed. The polypeptide is Translation initiation factor eIF2B subunit alpha (Eif2b1) (Rattus norvegicus (Rat)).